A 372-amino-acid polypeptide reads, in one-letter code: Ribosomal RNA small subunit methyltransferase H (372 aa).

S-adenosyl-L-methionine-binding positions include 44 to 46 (GGH), Asp-63, Leu-97, Asp-111, and Gln-118. The span at 315–334 (RAAERLDPTAEQRRRTDRER) shows a compositional bias: basic and acidic residues. The disordered stretch occupies residues 315-372 (RAAERLDPTAEQRRRTDRERYRRRVRAMHQPGTGSAVRRPTPGDDGTGTDEEGEGHDS). Over residues 361–372 (TGTDEEGEGHDS) the composition is skewed to acidic residues.

It belongs to the methyltransferase superfamily. RsmH family.

It is found in the cytoplasm. It catalyses the reaction cytidine(1402) in 16S rRNA + S-adenosyl-L-methionine = N(4)-methylcytidine(1402) in 16S rRNA + S-adenosyl-L-homocysteine + H(+). Specifically methylates the N4 position of cytidine in position 1402 (C1402) of 16S rRNA. The protein is Ribosomal RNA small subunit methyltransferase H of Salinispora arenicola (strain CNS-205).